The following is a 600-amino-acid chain: Repressor of filamentous growth 1 (600 aa).

Over residues 1-14 (MSTAIYYSTHNNMH) the composition is skewed to polar residues. Disordered regions lie at residues 1–59 (MSTA…NSAN), 112–160 (NGGY…TDIS), 180–200 (GIDG…NNNN), 266–337 (AEEE…SRDN), 427–549 (STTS…GYDN), and 564–600 (QQGL…QPPQ). 2 stretches are compositionally biased toward low complexity: residues 20 to 39 (TNGS…SNPN) and 47 to 59 (INNN…NSAN). A compositionally biased stretch (polar residues) spans 131-160 (FDTSYSNQTTPTSAYTNFNNDSTHSPTDIS). Positions 188 to 200 (NNNNNNNNNNNNN) are enriched in low complexity. A DNA-binding region (HMG box) is located at residues 212–281 (IPRPRNAFIL…NHAKKYPGYR (70 aa)). The span at 272–289 (NHAKKYPGYRYTPRRNGR) shows a compositional bias: basic residues. Residues 297–312 (KNKPLPNNKSNSISGM) show a composition bias toward low complexity. Over residues 313–322 (SGSGGGGGSI) the composition is skewed to gly residues. Over residues 427-470 (STTSTTAPTTTTTTTTNASSIGLSVPPTATTTSTSSQPTSANSQ) the composition is skewed to low complexity. Polar residues predominate over residues 481-496 (PVSSTHHQSSISEIAA). The span at 497–506 (QQQQQQQQQQ) shows a compositional bias: low complexity. Positions 507-547 (FMYNTNYSTIPPNNTTTMQQHSAGTGNDYSLNGNNSGNTGY) are enriched in polar residues. 2 stretches are compositionally biased toward low complexity: residues 564-574 (QQGLQVQQQGQ) and 581-600 (HAAQ…QPPQ).

The protein resides in the nucleus. Transcription regulator that functions in both the positive and negative regulation of filamentous growth, depending upon the environmental conditions. Recruits the TUP1/SSN6 general repression complex to achieve repression. Regulates genes encoding cell wall components that are specifically expressed in the filamentous forms such as HWP1, RBT1, HYR1, ECE1, ALS1, RBT4 and RBT5. The sequence is that of Repressor of filamentous growth 1 (RFG1) from Candida albicans (strain SC5314 / ATCC MYA-2876) (Yeast).